The following is a 476-amino-acid chain: Riboflavin transporter rft-2 (476 aa).

A helical transmembrane segment spans residues 1 to 21 (MGCSAATFILVALFGSSSWMG). The Cytoplasmic portion of the chain corresponds to 22 to 41 (TNSVWMQLPLLTSELPEQWN). The helical transmembrane segment at 42-62 (LPSYLAGVVQIACIVPLIYTI) threads the bilayer. Topologically, residues 63-75 (LHKGVKSFTIPTA) are extracellular. Residues 76–96 (PLIIALLSLACCCQLGLSFFW) traverse the membrane as a helical segment. Residues 97 to 113 (SDYSEIFGAPRSWPLYS) lie on the Cytoplasmic side of the membrane. The helical transmembrane segment at 114–134 (LLFGLAIVNAMSNVLFMPFMA) threads the bilayer. At 135-140 (QFHPAY) the chain is on the extracellular side. The chain crosses the membrane as a helical span at residues 141–161 (LNAYFVGMGLSSLAPSLLSLA). Residues 162–185 (QGTSMFKCDEKGVAERFPPNFSVS) are Cytoplasmic-facing. A helical transmembrane segment spans residues 186 to 206 (IFFFVIFSFTCVALFAFIALY). The Extracellular portion of the chain corresponds to 207–306 (RSGAHTHFAT…HPVDYITGVK (100 aa)). The tract at residues 215-249 (ATPNKKEPNEGTPLKKDLNNTSSSRKGDDEDESPI) is disordered. A compositionally biased stretch (basic and acidic residues) spans 218–232 (NKKEPNEGTPLKKDL). N-linked (GlcNAc...) asparagine glycosylation occurs at Asn233. A helical transmembrane segment spans residues 307–327 (FTFLLFTTALVNAQMNGIITS). Topologically, residues 328-342 (VQSYAALPYSQATYH) are cytoplasmic. The chain crosses the membrane as a helical span at residues 343–363 (FAVTLSNVVSPLSSFLPFFIS). Residues 364–366 (VRS) lie on the Extracellular side of the membrane. The helical transmembrane segment at 367-387 (IPVLAILTACSTAMTAFIVYL) threads the bilayer. At 388 to 393 (AALSPN) the chain is on the cytoplasmic side. Residues 394–414 (LIFNSVTIGSALSIGGSLIAA) form a helical membrane-spanning segment. Residues 415 to 437 (GLHSYLRVVFASLLREGHQSESR) lie on the Extracellular side of the membrane. Residues 438–458 (LFWCGVFIQIGSFIGSAVMFP) form a helical membrane-spanning segment. Residues 459-476 (LVNIAHLFTSAPQCKSIS) lie on the Cytoplasmic side of the membrane.

This sequence belongs to the riboflavin transporter family. In terms of tissue distribution, expressed in intestine and pharynx.

It localises to the cell membrane. It carries out the reaction riboflavin(in) = riboflavin(out). Riboflavin transporter. In Caenorhabditis elegans, this protein is Riboflavin transporter rft-2.